Consider the following 119-residue polypeptide: Small ribosomal subunit protein bS16 (119 aa).

It belongs to the bacterial ribosomal protein bS16 family.

The protein is Small ribosomal subunit protein bS16 of Chlamydia caviae (strain ATCC VR-813 / DSM 19441 / 03DC25 / GPIC) (Chlamydophila caviae).